Here is a 252-residue protein sequence, read N- to C-terminus: Trans-aconitate 2-methyltransferase (252 aa).

The protein belongs to the methyltransferase superfamily. Tam family.

The protein localises to the cytoplasm. The enzyme catalyses trans-aconitate + S-adenosyl-L-methionine = (E)-3-(methoxycarbonyl)pent-2-enedioate + S-adenosyl-L-homocysteine. Functionally, catalyzes the S-adenosylmethionine monomethyl esterification of trans-aconitate. This is Trans-aconitate 2-methyltransferase from Shigella dysenteriae serotype 1 (strain Sd197).